The sequence spans 172 residues: NAD(P)H-quinone oxidoreductase subunit I, chloroplastic (172 aa).

4Fe-4S ferredoxin-type domains follow at residues G55–K84 and L95–E124. [4Fe-4S] cluster-binding residues include C64, C67, C70, C74, C104, C107, C110, and C114.

The protein belongs to the complex I 23 kDa subunit family. As to quaternary structure, NDH is composed of at least 16 different subunits, 5 of which are encoded in the nucleus. [4Fe-4S] cluster serves as cofactor.

It localises to the plastid. The protein resides in the chloroplast thylakoid membrane. It catalyses the reaction a plastoquinone + NADH + (n+1) H(+)(in) = a plastoquinol + NAD(+) + n H(+)(out). The enzyme catalyses a plastoquinone + NADPH + (n+1) H(+)(in) = a plastoquinol + NADP(+) + n H(+)(out). In terms of biological role, NDH shuttles electrons from NAD(P)H:plastoquinone, via FMN and iron-sulfur (Fe-S) centers, to quinones in the photosynthetic chain and possibly in a chloroplast respiratory chain. The immediate electron acceptor for the enzyme in this species is believed to be plastoquinone. Couples the redox reaction to proton translocation, and thus conserves the redox energy in a proton gradient. The polypeptide is NAD(P)H-quinone oxidoreductase subunit I, chloroplastic (Crucihimalaya wallichii (Rock-cress)).